The chain runs to 362 residues: Chorismate synthase (362 aa).

NADP(+) is bound at residue arginine 46. Residues 122-124 (RSS), 238-239 (NA), glycine 278, 293-297 (KPTPS), and arginine 319 contribute to the FMN site.

The protein belongs to the chorismate synthase family. Homotetramer. It depends on FMNH2 as a cofactor.

It catalyses the reaction 5-O-(1-carboxyvinyl)-3-phosphoshikimate = chorismate + phosphate. It participates in metabolic intermediate biosynthesis; chorismate biosynthesis; chorismate from D-erythrose 4-phosphate and phosphoenolpyruvate: step 7/7. Catalyzes the anti-1,4-elimination of the C-3 phosphate and the C-6 proR hydrogen from 5-enolpyruvylshikimate-3-phosphate (EPSP) to yield chorismate, which is the branch point compound that serves as the starting substrate for the three terminal pathways of aromatic amino acid biosynthesis. This reaction introduces a second double bond into the aromatic ring system. This Campylobacter jejuni (strain RM1221) protein is Chorismate synthase.